The chain runs to 309 residues: Porphobilinogen deaminase (309 aa).

At Cys244 the chain carries S-(dipyrrolylmethanemethyl)cysteine.

It belongs to the HMBS family. Monomer. The cofactor is dipyrromethane.

The catalysed reaction is 4 porphobilinogen + H2O = hydroxymethylbilane + 4 NH4(+). It participates in porphyrin-containing compound metabolism; protoporphyrin-IX biosynthesis; coproporphyrinogen-III from 5-aminolevulinate: step 2/4. In terms of biological role, tetrapolymerization of the monopyrrole PBG into the hydroxymethylbilane pre-uroporphyrinogen in several discrete steps. The polypeptide is Porphobilinogen deaminase (Listeria monocytogenes serovar 1/2a (strain ATCC BAA-679 / EGD-e)).